Reading from the N-terminus, the 31-residue chain is L-amino-acid oxidase (31 aa).

This sequence belongs to the flavin monoamine oxidase family. FIG1 subfamily. In terms of assembly, homodimer; non-covalently linked. The cofactor is FAD. N-glycosylated. In terms of tissue distribution, expressed by the venom gland.

The protein localises to the secreted. The enzyme catalyses an L-alpha-amino acid + O2 + H2O = a 2-oxocarboxylate + H2O2 + NH4(+). It catalyses the reaction L-leucine + O2 + H2O = 4-methyl-2-oxopentanoate + H2O2 + NH4(+). It carries out the reaction L-phenylalanine + O2 + H2O = 3-phenylpyruvate + H2O2 + NH4(+). The catalysed reaction is L-histidine + O2 + H2O = 3-(imidazol-5-yl)pyruvate + H2O2 + NH4(+). Functionally, catalyzes an oxidative deamination of predominantly hydrophobic and aromatic L-amino acids, thus producing hydrogen peroxide that may contribute to the diverse toxic effects of this enzyme. Is moderately active on L-Leu, L-His, and L-Phe, and very weakly active on L-Thr, and L-Cys. Exhibits diverse biological activities, such as hemorrhage, hemolysis, edema, antibacterial and antiparasitic activities, as well as regulation of platelet aggregation. Its effect on platelets is controversial, since it either induces aggregation or inhibits agonist-induced aggregation. These different effects are probably due to different experimental conditions. Inhibits growth of B.subtilis strain ATCC 6633 (MIC=32 uM), E.faecalis strain ATCC 12953 (MIC=32 uM), S.aureus strain ATCC 29213 (MIC=32 uM), S.pyogenes strain ATCC 19615 (MIC=8 uM), E.coli strain ATCC 8739 (MIC=4 uM), K.pneumoniae strain ATCC 13885 (MIC=2 uM), P.mirabilis strain ATCC 25933 (MIC=2 uM), P.aeruginosa strain ATCC 15442 (MIC=8 uM) and S.typhimurium strain ATCC 14028 (MIC=8 uM). The polypeptide is L-amino-acid oxidase (Bothrops mattogrossensis (Pitviper)).